The sequence spans 372 residues: Flap endonuclease 1 (372 aa).

Positions 1 to 105 are N-domain; the sequence is MGVKGLNQLI…GELEKRLLRR (105 aa). Aspartate 34 is a binding site for Mg(2+). DNA-binding residues include arginine 47 and arginine 71. Mg(2+)-binding residues include aspartate 87, glutamate 159, glutamate 161, aspartate 180, and aspartate 182. Positions 123-254 are I-domain; it reads EVLKFEKRLV…ATAFKLIKEH (132 aa). Glutamate 159 is a binding site for DNA. DNA contacts are provided by glycine 232 and aspartate 234. Residue aspartate 234 participates in Mg(2+) binding. Residues 339–347 are interaction with PCNA; that stretch reads VQGRLDGFF. The segment covering 353 to 366 has biased composition (basic and acidic residues); that stretch reads DDKKRKADPKESKA. The tract at residues 353-372 is disordered; sequence DDKKRKADPKESKASKKKKK.

Belongs to the XPG/RAD2 endonuclease family. FEN1 subfamily. In terms of assembly, interacts with PCNA. Three molecules of RAD27 bind to one PCNA trimer with each molecule binding to one PCNA monomer. PCNA stimulates the nuclease activity without altering cleavage specificity. The cofactor is Mg(2+). In terms of processing, phosphorylated. Phosphorylation upon DNA damage induces relocalization to the nuclear plasma.

It is found in the nucleus. It localises to the nucleolus. The protein localises to the nucleoplasm. Its subcellular location is the mitochondrion. Functionally, structure-specific nuclease with 5'-flap endonuclease and 5'-3' exonuclease activities involved in DNA replication and repair. During DNA replication, cleaves the 5'-overhanging flap structure that is generated by displacement synthesis when DNA polymerase encounters the 5'-end of a downstream Okazaki fragment. It enters the flap from the 5'-end and then tracks to cleave the flap base, leaving a nick for ligation. Also involved in the long patch base excision repair (LP-BER) pathway, by cleaving within the apurinic/apyrimidinic (AP) site-terminated flap. Acts as a genome stabilization factor that prevents flaps from equilibrating into structures that lead to duplications and deletions. Also possesses 5'-3' exonuclease activity on nicked or gapped double-stranded DNA, and exhibits RNase H activity. Also involved in replication and repair of rDNA and in repairing mitochondrial DNA. The sequence is that of Flap endonuclease 1 from Candida albicans (strain WO-1) (Yeast).